Reading from the N-terminus, the 85-residue chain is COMM domain-containing protein 6 (85 aa).

Methionine 1 is modified (N-acetylmethionine). The region spanning 18 to 85 (QLVDFQWKLG…KEIAAVIETV (68 aa)) is the COMM domain.

The protein belongs to the COMM domain-containing protein 6 family. As to quaternary structure, component of the commander complex consisting of the CCC subcomplex and the retriever subcomplex. Component of the CCC (COMMD/CCDC22/CCDC93) subcomplex consisting of COMMD1, COMMD2, COMMD3, COMMD4, COMMD5, COMMD6, COMMD7, COMMD8, COMMD9, COMMD10, CCDC22 and CCDC93; within the complex forms a heterodimer with COMMD1. May form a homodimer with isoform 1. Interacts with RELA, RELB, NFKB1/p105. Does not interact with NFKBIB. Interacts with CCDC22, CCDC93, SCNN1B, CUL4A. Ubiquitous. Expressed in brain, heart, skeletal muscle, lung, pancreas, liver, kidney, small intestine and placenta.

Its subcellular location is the nucleus. It localises to the cytoplasm. Scaffold protein in the commander complex that is essential for endosomal recycling of transmembrane cargos; the commander complex is composed of the CCC subcomplex and the retriever subcomplex. May modulate activity of cullin-RING E3 ubiquitin ligase (CRL) complexes. Down-regulates activation of NF-kappa-B. Inhibits TNF-induced NFKB1 activation. This Homo sapiens (Human) protein is COMM domain-containing protein 6 (COMMD6).